Reading from the N-terminus, the 320-residue chain is ADP/ATP translocase 4 (320 aa).

The Mitochondrial intermembrane segment spans residues 1-20 (MSNESSKKQSSKKALFDPVS). One copy of the Solcar 1 repeat lies at 19–111 (VSFSKDLLAG…FAFKDKYKEL (93 aa)). A helical membrane pass occupies residues 21 to 50 (FSKDLLAGGVAAAVSKTAVAPIERVKLLLQ). Residues 51–87 (VQASSKQISPEARYKGMLDCLVRIPREQGFLSYWRGN) lie on the Mitochondrial matrix side of the membrane. The chain crosses the membrane as a helical span at residues 88 to 112 (LANVIRYFPTQALNFAFKDKYKELF). ADP is bound by residues R93 and K105. Residues 113–122 (MSGVNKEKQF) are Mitochondrial intermembrane-facing. The helical transmembrane segment at 123 to 143 (WRWFLANLASGGAAGATSLCV) threads the bilayer. Solcar repeat units lie at residues 124–214 (RWFL…VKGL) and 221–308 (TPFL…IKEF). The Mitochondrial matrix segment spans residues 144–191 (VYPLDFARTRLGVDIGKGPEQRQFTGLGDCIMKIAKSDGLIGLYQGFG). The chain crosses the membrane as a helical span at residues 192 to 212 (VSVQGIIVYRASYFGAYDTVK). The Mitochondrial intermembrane portion of the chain corresponds to 213 to 223 (GLLPKPKETPF). Residues 224–244 (LVSFIIAQIVTTCSGILSYPF) form a helical membrane-spanning segment. The Mitochondrial matrix segment spans residues 245–284 (DTVRRRMMMQSGESDRQYKGTIDCFLKIYRHEGVPAFFRG). R248 serves as a coordination point for ADP. The interval 248–253 (RRRMMM) is important for transport activity. The Nucleotide carrier signature motif signature appears at 248–253 (RRRMMM). Residues 285–302 (AFSNILRGTGGALVLVLY) traverse the membrane as a helical segment. Residues 303-320 (DKIKEFLNIDVGGSSSGD) are Mitochondrial intermembrane-facing.

It belongs to the mitochondrial carrier (TC 2.A.29) family. Monomer. Specifically expressed in undifferentiated embryonic stem cells and germ cells. Expression is down-regulated after embryonic stem cells differentiation. In adults, only expressed in developing gametes in testis. In testis, expressed at higher level in spermatocytes. Expression is probably associated with entry of the male germ cells into meiosis. Expressed at very low level in Sertoli cells.

It is found in the mitochondrion inner membrane. Its subcellular location is the membrane. The protein localises to the cell projection. It localises to the cilium. The protein resides in the flagellum membrane. It carries out the reaction ADP(in) + ATP(out) = ADP(out) + ATP(in). The enzyme catalyses dATP(out) + ADP(in) = dATP(in) + ADP(out). The catalysed reaction is dADP(in) + ADP(out) = dADP(out) + ADP(in). It catalyses the reaction H(+)(in) = H(+)(out). Its activity is regulated as follows. The matrix-open state (m-state) is inhibited by the membrane-permeable bongkrekic acid (BKA). The cytoplasmic-open state (c-state) is inhibited by the membrane-impermeable toxic inhibitor carboxyatractyloside (CATR). Proton transporter activity is inhibited by ADP:ATP antiporter activity. In terms of biological role, ADP:ATP antiporter that mediates import of ADP into the mitochondrial matrix for ATP synthesis, and export of ATP out to fuel the cell. Cycles between the cytoplasmic-open state (c-state) and the matrix-open state (m-state): operates by the alternating access mechanism with a single substrate-binding site intermittently exposed to either the cytosolic (c-state) or matrix (m-state) side of the inner mitochondrial membrane. Specifically required during spermatogenesis, probably to mediate ADP:ATP exchange in spermatocytes. Large ATP supplies from mitochondria may be critical for normal progression of spermatogenesis during early stages of meiotic prophase I, including DNA double-strand break repair and chromosomal synapsis. In addition to its ADP:ATP antiporter activity, also involved in mitochondrial uncoupling and mitochondrial permeability transition pore (mPTP) activity. Plays a role in mitochondrial uncoupling by acting as a proton transporter: proton transport uncouples the proton flows via the electron transport chain and ATP synthase to reduce the efficiency of ATP production and cause mitochondrial thermogenesis. Proton transporter activity is inhibited by ADP:ATP antiporter activity, suggesting that SLC25A31/ANT4 acts as a master regulator of mitochondrial energy output by maintaining a delicate balance between ATP production (ADP:ATP antiporter activity) and thermogenesis (proton transporter activity). Proton transporter activity requires free fatty acids as cofactor, but does not transport it. Among nucleotides, may also exchange ADP for dATP and dADP. Also plays a key role in mPTP opening, a non-specific pore that enables free passage of the mitochondrial membranes to solutes of up to 1.5 kDa, and which contributes to cell death. It is however unclear if SLC25A31/ANT4 constitutes a pore-forming component of mPTP or regulates it. The protein is ADP/ATP translocase 4 of Mus musculus (Mouse).